A 170-amino-acid polypeptide reads, in one-letter code: Adenine phosphoribosyltransferase (170 aa).

It belongs to the purine/pyrimidine phosphoribosyltransferase family. In terms of assembly, homodimer.

The protein localises to the cytoplasm. The catalysed reaction is AMP + diphosphate = 5-phospho-alpha-D-ribose 1-diphosphate + adenine. It participates in purine metabolism; AMP biosynthesis via salvage pathway; AMP from adenine: step 1/1. Catalyzes a salvage reaction resulting in the formation of AMP, that is energically less costly than de novo synthesis. The polypeptide is Adenine phosphoribosyltransferase (Carboxydothermus hydrogenoformans (strain ATCC BAA-161 / DSM 6008 / Z-2901)).